Here is a 271-residue protein sequence, read N- to C-terminus: WUSCHEL-related homeobox 6 (271 aa).

The homeobox; WUS-type DNA-binding region spans 57–121 (AATLRWNPTP…NHKARERLKR (65 aa)). The disordered stretch occupies residues 118 to 195 (RLKRRRREGG…TEESDQRASE (78 aa)). 2 stretches are compositionally biased toward basic and acidic residues: residues 132–148 (PHKD…RVDQ) and 180–195 (NEDH…RASE).

It belongs to the WUS homeobox family. As to expression, highly expressed in developing ovules. Present in developing primordia and differentiating organs but absent in mature organs.

It localises to the nucleus. Transcription factor that plays a central role in ovule patterning by regulating cell proliferation of the maternal integuments and differentiation of the maegaspore mother cell (MCC). Involved in AGAMOUS (AG) repression in leaves. The chain is WUSCHEL-related homeobox 6 (WOX6) from Arabidopsis thaliana (Mouse-ear cress).